Reading from the N-terminus, the 140-residue chain is Large ribosomal subunit protein uL14 (140 aa).

Ser17 carries the post-translational modification Phosphoserine. Tyr38 carries the post-translational modification Phosphotyrosine.

Belongs to the universal ribosomal protein uL14 family. Component of the large ribosomal subunit.

Its subcellular location is the cytoplasm. In terms of biological role, component of the large ribosomal subunit. The ribosome is a large ribonucleoprotein complex responsible for the synthesis of proteins in the cell. This Canis lupus familiaris (Dog) protein is Large ribosomal subunit protein uL14 (RPL23).